A 658-amino-acid chain; its full sequence is tRNA 5-methylaminomethyl-2-thiouridine biosynthesis bifunctional protein MnmC (658 aa).

Positions 1–236 (MIPELPHAQL…KWEVLRGEFL (236 aa)) are tRNA (mnm(5)s(2)U34)-methyltransferase. The FAD-dependent cmnm(5)s(2)U34 oxidoreductase stretch occupies residues 265-658 (IGGGLAGCAS…ALRRLIRGKA (394 aa)).

The protein in the N-terminal section; belongs to the methyltransferase superfamily. tRNA (mnm(5)s(2)U34)-methyltransferase family. It in the C-terminal section; belongs to the DAO family. FAD serves as cofactor.

The protein localises to the cytoplasm. The catalysed reaction is 5-aminomethyl-2-thiouridine(34) in tRNA + S-adenosyl-L-methionine = 5-methylaminomethyl-2-thiouridine(34) in tRNA + S-adenosyl-L-homocysteine + H(+). Its function is as follows. Catalyzes the last two steps in the biosynthesis of 5-methylaminomethyl-2-thiouridine (mnm(5)s(2)U) at the wobble position (U34) in tRNA. Catalyzes the FAD-dependent demodification of cmnm(5)s(2)U34 to nm(5)s(2)U34, followed by the transfer of a methyl group from S-adenosyl-L-methionine to nm(5)s(2)U34, to form mnm(5)s(2)U34. The protein is tRNA 5-methylaminomethyl-2-thiouridine biosynthesis bifunctional protein MnmC of Pseudomonas fluorescens (strain ATCC BAA-477 / NRRL B-23932 / Pf-5).